The primary structure comprises 31 residues: Cytochrome b6-f complex subunit 6 (31 aa).

The helical transmembrane segment at Ile4–Gly24 threads the bilayer.

This sequence belongs to the PetL family. The 4 large subunits of the cytochrome b6-f complex are cytochrome b6, subunit IV (17 kDa polypeptide, PetD), cytochrome f and the Rieske protein, while the 4 small subunits are PetG, PetL, PetM and PetN. The complex functions as a dimer.

It localises to the plastid. It is found in the chloroplast thylakoid membrane. Component of the cytochrome b6-f complex, which mediates electron transfer between photosystem II (PSII) and photosystem I (PSI), cyclic electron flow around PSI, and state transitions. PetL is important for photoautotrophic growth as well as for electron transfer efficiency and stability of the cytochrome b6-f complex. This Physcomitrium patens (Spreading-leaved earth moss) protein is Cytochrome b6-f complex subunit 6.